A 492-amino-acid chain; its full sequence is Fascin-2 (492 aa).

Belongs to the fascin family. Exclusively expressed in the eye, specifically in photoreceptor cells.

Its subcellular location is the cytoplasm. The protein localises to the cytoskeleton. It localises to the cell projection. The protein resides in the stereocilium. Functionally, acts as an actin bundling protein. May play a pivotal role in photoreceptor cell-specific events, such as disk morphogenesis. This chain is Fascin-2 (FSCN2), found in Bos taurus (Bovine).